Consider the following 257-residue polypeptide: Enolase-phosphatase E1 (257 aa).

2 residues coordinate Mg(2+): Asp16 and Glu18. Substrate contacts are provided by residues 150–151 (SS) and Lys184. A Mg(2+)-binding site is contributed by Asp209.

It belongs to the HAD-like hydrolase superfamily. MasA/MtnC family. Monomer. Mg(2+) is required as a cofactor.

Its subcellular location is the cytoplasm. It is found in the nucleus. It catalyses the reaction 5-methylsulfanyl-2,3-dioxopentyl phosphate + H2O = 1,2-dihydroxy-5-(methylsulfanyl)pent-1-en-3-one + phosphate. The protein operates within amino-acid biosynthesis; L-methionine biosynthesis via salvage pathway; L-methionine from S-methyl-5-thio-alpha-D-ribose 1-phosphate: step 3/6. Its pathway is amino-acid biosynthesis; L-methionine biosynthesis via salvage pathway; L-methionine from S-methyl-5-thio-alpha-D-ribose 1-phosphate: step 4/6. Bifunctional enzyme that catalyzes the enolization of 2,3-diketo-5-methylthiopentyl-1-phosphate (DK-MTP-1-P) into the intermediate 2-hydroxy-3-keto-5-methylthiopentenyl-1-phosphate (HK-MTPenyl-1-P), which is then dephosphorylated to form the acireductone 1,2-dihydroxy-3-keto-5-methylthiopentene (DHK-MTPene). The sequence is that of Enolase-phosphatase E1 (Enoph1) from Mus musculus (Mouse).